A 388-amino-acid polypeptide reads, in one-letter code: Succinate--CoA ligase [ADP-forming] subunit beta (388 aa).

An ATP-grasp domain is found at 9–244 (KGILSGFDVR…PHEYSEEELE (236 aa)). Residues Lys46, 53 to 55 (GRG), Glu99, Val102, and Glu107 each bind ATP. Mg(2+) contacts are provided by Asn199 and Asp213. Substrate-binding positions include Asn264 and 320-322 (GIM).

The protein belongs to the succinate/malate CoA ligase beta subunit family. As to quaternary structure, heterotetramer of two alpha and two beta subunits. Requires Mg(2+) as cofactor.

The catalysed reaction is succinate + ATP + CoA = succinyl-CoA + ADP + phosphate. The enzyme catalyses GTP + succinate + CoA = succinyl-CoA + GDP + phosphate. Its pathway is carbohydrate metabolism; tricarboxylic acid cycle; succinate from succinyl-CoA (ligase route): step 1/1. Functionally, succinyl-CoA synthetase functions in the citric acid cycle (TCA), coupling the hydrolysis of succinyl-CoA to the synthesis of either ATP or GTP and thus represents the only step of substrate-level phosphorylation in the TCA. The beta subunit provides nucleotide specificity of the enzyme and binds the substrate succinate, while the binding sites for coenzyme A and phosphate are found in the alpha subunit. The sequence is that of Succinate--CoA ligase [ADP-forming] subunit beta from Anaplasma phagocytophilum (strain HZ).